Here is an 834-residue protein sequence, read N- to C-terminus: Semaphorin-4C (834 aa).

An N-terminal signal peptide occupies residues 1–20; the sequence is MAPHWAVWLLAAGLWGLGIG. The Extracellular portion of the chain corresponds to 21-664; that stretch reads AEMWWNLVPR…EARAPLENLG (644 aa). Positions 30 to 497 constitute a Sema domain; it reads RKTVSSGELV…SRSQLVQLSL (468 aa). The segment at 46-489 is dominant negative effect on myogenic differentiation; it reads SQTGIQDFLT…SKKVLFAGSR (444 aa). A disulfide bridge connects residues C99 and C110. N106 and N121 each carry an N-linked (GlcNAc...) asparagine glycan. 3 disulfides stabilise this stretch: C128/C137, C261/C370, and C285/C330. 2 N-linked (GlcNAc...) asparagine glycosylation sites follow: N310 and N419. A PSI domain is found at 499-552; sequence DCTKYRFCVDCVLARDPYCAWNVNTSRCVATTSGRSGSFLVQHVANLDTSKMCN. Intrachain disulfides connect C500-C517 and C509-C526. N-linked (GlcNAc...) asparagine glycans are attached at residues N522 and N565. The 89-residue stretch at 557 to 645 folds into the Ig-like C2-type domain; that stretch reads KKVRSIPKNI…RLAAESYLVA (89 aa). C578 and C628 are disulfide-bonded. The chain crosses the membrane as a helical span at residues 665-685; sequence LVWLAVVALGAVCLVLLLLVL. The Cytoplasmic segment spans residues 686–834; that stretch reads SLRRRLREEL…PDSNPEESSV (149 aa). Phosphoserine is present on S743. A disordered region spans residues 749–834; that stretch reads GHARCQPGGG…PDSNPEESSV (86 aa). The segment covering 757-773 has biased composition (pro residues); sequence GGPPSPPPGIPGQPLPS. The PDZ-binding signature appears at 831-834; sequence ESSV.

This sequence belongs to the semaphorin family. Interacts (via the PDZ-binding motif) with GIPC (via the PDZ domain). Interacts with NCDN. Interacts (via the PDZ-binding motif) with DLG4. Interacts with PLXNB2. In terms of tissue distribution, predominantly expressed in brain (at protein level).

It localises to the postsynaptic density membrane. It is found in the cytoplasmic vesicle. The protein localises to the secretory vesicle. The protein resides in the synaptic vesicle membrane. Its function is as follows. Cell surface receptor for PLXNB2 that plays an important role in cell-cell signaling. PLXNB2 binding promotes downstream activation of RHOA and phosphorylation of ERBB2 at 'Tyr-1248'. Required for normal brain development, axon guidance and cell migration. Probable signaling receptor which may play a role in myogenic differentiation through activation of the stress-activated MAPK cascade. The protein is Semaphorin-4C (Sema4c) of Mus musculus (Mouse).